The sequence spans 1503 residues: EF-hand calcium-binding domain-containing protein 5 (1503 aa).

A disordered region spans residues Met-1 to Arg-23. Over residues Glu-8–Arg-23 the composition is skewed to basic and acidic residues. Residue Ser-77 is modified to Phosphoserine. 3 disordered regions span residues Ala-477–Pro-518, Ile-544–Tyr-656, and Phe-730–Lys-750. A compositionally biased stretch (polar residues) spans His-549–Arg-561. 2 stretches are compositionally biased toward basic and acidic residues: residues Leu-562–Ser-582 and Gly-607–Ser-622. Positions Arg-869–Gly-904 constitute an EF-hand domain. 4 residues coordinate Ca(2+): Asp-882, Asp-884, Ser-886, and Glu-893.

The chain is EF-hand calcium-binding domain-containing protein 5 (EFCAB5) from Homo sapiens (Human).